Reading from the N-terminus, the 6684-residue chain is Replicase polyprotein 1ab (6684 aa).

The CoV Nsp1 globular domain maps to 2–108 (SSKQFKILVN…DFDLKIARTG (107 aa)). A CoV Nsp2 N-terminal domain is found at 111–349 (AIYVDQYMCG…KSLVACSVKR (239 aa)). Zn(2+)-binding residues include Cys-240, Cys-242, Cys-259, and Cys-260. Positions 240–260 (CPCGSESSGVGDWTGFKTACC) are C4. Residues 378 to 773 (NVGLLFKKTP…CNAARNDIEI (396 aa)) enclose the CoV Nsp2 middle domain. The CoV Nsp2 C-terminal domain occupies 768 to 879 (RNDIEIGGIP…VQRMYNKMGG (112 aa)). The 102-residue stretch at 882 to 983 (KTVSFSEEVD…DGIMISQYDI (102 aa)) folds into the Ubiquitin-like 1 domain. The interval 989–1032 (EKSEVSASSEEEEVESVEEDPENEIVEASEGAEGTSSQEEVETV) is disordered. Residues 997-1015 (SEEEEVESVEEDPENEIVE) are compositionally biased toward acidic residues. The region spanning 1055–1299 (PWAAAVDVQE…FKVEKVEQQP (245 aa)) is the Peptidase C16 1 domain. Cys-1093 (for PL1-PRO activity) is an active-site residue. The segment at 1164-1195 (CGCGEKEIVLERAVFKLTPLKESFNYGVCGDC) adopts a C4-type 1; degenerate zinc-finger fold. Catalysis depends on for PL1-PRO activity residues His-1244 and Asp-1257. A Macro domain is found at 1318 to 1489 (NDDLILPFYK…TIENFFSCSI (172 aa)). The Ubiquitin-like 2 domain maps to 1486-1542 (SCSIPVNVTEDNVNHERVSVSFDKTYGEQLKGTVVIKDKDVTNQLPSAFDVGQKVIK). In terms of domain architecture, Peptidase C16 2 spans 1550-1803 (AHYGFRDAAA…KVAASPKIVQ (254 aa)). The active-site For PL2-PRO activity is the Cys-1588. Positions 1667, 1670, 1694, and 1696 each coordinate Zn(2+). Residues 1667–1696 (CDKCAKVEKFVGPVVAAPLAIHGTDETCVH) form a C4-type 2; atypical zinc finger. Catalysis depends on for PL2-PRO activity residues His-1741 and Asp-1754. The chain crosses the membrane as a helical span at residues 1896-1916 (LVLLLIAIYNFFYLFVSIPVV). The segment at 1896-2053 (LVLLLIAIYN…LALKHIVFAC (158 aa)) is HD1. Positions 1905 to 1970 (NFFYLFVSIP…LQVTWDFKSD (66 aa)) constitute a 3Ecto domain. 2 disulfide bridges follow: Cys-1921–Cys-1948 and Cys-1939–Cys-1945. Transmembrane regions (helical) follow at residues 1995–2015 (CFLM…FGYV) and 2033–2053 (FVIV…VFAC). A Y1 region spans residues 2044–2134 (LALKHIVFAC…SVKQTVYATD (91 aa)). In terms of domain architecture, CoV Nsp3 Y spans 2044-2384 (LALKHIVFAC…PYERFTESVS (341 aa)). The Zn(2+) site is built by His-2048, Cys-2053, Cys-2058, Cys-2061, Cys-2094, His-2097, Cys-2101, and Cys-2104. Residues 2048–2061 (HIVFACSNPSCKTC) are ZF1. Residues 2094–2104 (CKKHNFYCKNC) are ZF2. Positions 2135–2224 (RSHQEVTKVE…IVNSDLLEDL (90 aa)) are Y2. The segment at 2135–2384 (RSHQEVTKVE…PYERFTESVS (250 aa)) is coV-Y. Residues 2225 to 2281 (SVDFKGALFNAKKNVIKNSFNVDVSECKNLDECYRACNLNVSFSTFEMAVNNAHRFG) are Y3. A Y4 region spans residues 2282-2384 (ILITDRSFNN…PYERFTESVS (103 aa)). Helical transmembrane passes span 2401–2421 (IVIL…YSVA), 2467–2487 (YGFI…VFDL), 2497–2517 (PAYV…AFGV), 2538–2558 (CVFN…VYCA), 2666–2686 (GAML…YGVL), 2695–2715 (CTFL…SYFV), 2721–2741 (FMII…YPGI), and 2746–2766 (FIIA…ILVF). The segment at 2401–2766 (IVILVFVFIF…YVITAYILVF (366 aa)) is HD2. Residues 2783 to 2878 (LFEGDKFVGN…PTVSVNSTLQ (96 aa)) enclose the Nsp4C domain. In terms of domain architecture, Peptidase C30 spans 2879–3180 (SGLRKMAQPS…IRQMYGVNLQ (302 aa)). Residues His-2919 and Cys-3022 each act as for 3CL-PRO activity in the active site. 8 helical membrane passes run 3187–3207 (FFYP…EFFM), 3217–3237 (TFVS…VSGI), 3242–3262 (LFFM…NLFW), 3280–3300 (MFLP…IVFV), 3313–3333 (WFSL…IFGT), 3347–3367 (FVNM…VVIA), 3371–3391 (IAYY…FGFM), and 3394–3414 (ISIV…ILYW). The interval 3187–3414 (FFYPIMTAMT…FCCYYGILYW (228 aa)) is HD3. The RdRp Nsp7 cofactor domain maps to 3475 to 3557 (SKLTEMKCTN…SYFENTTILQ (83 aa)). Residues 3558-3752 (SVASAYAALP…ITCERTTKLQ (195 aa)) form the RdRp Nsp8 cofactor domain. One can recognise a Nsp9 ssRNA-binding domain in the interval 3753–3863 (NNEIMPGKLK…GYIGATVRLQ (111 aa)). The 141-residue stretch at 3864 to 4004 (AGKPTEHPSN…TSMQSFTVDQ (141 aa)) folds into the ExoN/MTase coactivator domain. Cys-3937, Cys-3940, His-3946, Cys-3953, Cys-3979, Cys-3982, Cys-3990, and Cys-3992 together coordinate Zn(2+). Zinc fingers lie at residues 3937-3953 (CIYC…DGLC) and 3979-3992 (CVVC…GCMC). A NiRAN domain is found at 4006 to 4255 (YLNRVRGSSA…ESENFVKSDI (250 aa)). The region spanning 4261–4359 (KQYDLLAYDF…WNLDVKLDTM (99 aa)) is the Nsp12 Interface domain. His-4290, Cys-4296, Cys-4301, Cys-4305, and Cys-4482 together coordinate Zn(2+). The Nsp12 RNA-dependent RNA polymerase domain maps to 4360 to 4927 (KLSMTDLLRF…SLYEKSTVLQ (568 aa)). The interval 4362–4576 (SMTDLLRFVT…HQKHLKSIAA (215 aa)) is rdRp Fingers N-ter. The segment at 4577–4615 (TRNATVVIGSTKFYGGWDNMLKNLMRDVDNGCLMGWDYP) is rdRp Palm N-ter. Residues 4607–4769 (GCLMGWDYPK…CYNKDYADLG (163 aa)) enclose the RdRp catalytic domain. The tract at residues 4616-4674 (KCDRALPNMIRMASAMILGSKHVGCCTHNDRFYRLSNELAQVLTEVVHCTGGFYFKPGG) is rdRp Fingers C-ter. Zn(2+) contacts are provided by His-4637, Cys-4640, and Cys-4641. Positions 4675–4810 (TTSGDGTTAY…SVGPHEFCSQ (136 aa)) are rdRp Palm C-ter. Active-site residues include Ser-4754, Asp-4755, and Asp-4756. A rdRp Thumb region spans residues 4811-4927 (HTLQIVGPDG…SLYEKSTVLQ (117 aa)). In terms of domain architecture, CV ZBD spans 4928-5040 (AAGMCVVCGS…EDFNKLAVSD (113 aa)). Positions 4932, 4935, 4943, 4946, 4953, 4956, 4960, 4966, 4977, 4982, 4999, and 5002 each coordinate Zn(2+). Residues 5175–5366 (NTISKLYPVF…MCTLGPDVFL (192 aa)) form the (+)RNA virus helicase ATP-binding domain. 5210 to 5217 (GPPGSGKS) contacts ATP. The 170-residue stretch at 5367–5536 (HKCYRCPAEI…AKPETCGLFK (170 aa)) folds into the (+)RNA virus helicase C-terminal domain. The ExoN domain maps to 5598-5812 (LFCTRDFAMR…RCLAIHDCFV (215 aa)). Residues Asp-5616, Glu-5618, and Glu-5717 contribute to the active site. Residues Cys-5733, Cys-5735, Cys-5751, His-5754, His-5782, Cys-5786, and His-5789 each contribute to the Zn(2+) site. Residues His-5793 and Asp-5798 contribute to the active site. Cys-5804 provides a ligand contact to Zn(2+). In terms of domain architecture, N7-MTase spans 5821–6042 (YPFIDNEEKI…MLWHGFVNSK (222 aa)). Residue 5856 to 5862 (DVGNPKG) coordinates S-adenosyl-L-methionine. Positions 5933–5947 (CNGGALYVNNHAFHT) are gpppA-binding. Cys-5971, Cys-5988, Cys-5999, and His-6002 together coordinate Zn(2+). Residues 6046 to 6106 (SLENVAFNVV…NVAFELYAKR (61 aa)) form the Nsp15 N-terminal oligomerization domain. Positions 6107–6224 (KLGLTPPLTI…IYVRKNGEYV (118 aa)) constitute an AV-Nsp11N/CoV-Nsp15M domain. The region spanning 6241 to 6381 (KPRSTMEEDF…ENSHIKTFYP (141 aa)) is the NendoU domain. Catalysis depends on residues His-6271, His-6286, Lys-6327, Lys-6429, Asp-6513, Lys-6553, and Glu-6586. Positions 6385–6681 (SAEWNPGYSM…KLLNFGNHFV (297 aa)) constitute a Nidovirus-type SAM-dependent 2'-O-MTase domain.

The protein belongs to the coronaviruses polyprotein 1ab family. 3CL-PRO exists as monomer and homodimer. Eight copies of nsp7 and eight copies of nsp8 assemble to form a heterohexadecamer. Nsp9 is a dimer. Nsp10 forms a dodecamer. It depends on Mn(2+) as a cofactor. Post-translationally, specific enzymatic cleavages in vivo by its own proteases yield mature proteins. 3CL-PRO is autocatalytically processed.

The protein resides in the host membrane. The protein localises to the host cytoplasm. It localises to the host perinuclear region. It is found in the host endoplasmic reticulum-Golgi intermediate compartment. The enzyme catalyses Thiol-dependent hydrolysis of ester, thioester, amide, peptide and isopeptide bonds formed by the C-terminal Gly of ubiquitin (a 76-residue protein attached to proteins as an intracellular targeting signal).. The catalysed reaction is RNA(n) + a ribonucleoside 5'-triphosphate = RNA(n+1) + diphosphate. It carries out the reaction ATP + H2O = ADP + phosphate + H(+). It catalyses the reaction a 5'-end diphospho-ribonucleoside in mRNA + GTP + H(+) = a 5'-end (5'-triphosphoguanosine)-ribonucleoside in mRNA + diphosphate. The enzyme catalyses a 5'-end (N(7)-methyl 5'-triphosphoguanosine)-ribonucleoside in mRNA + S-adenosyl-L-methionine = a 5'-end (N(7)-methyl 5'-triphosphoguanosine)-(2'-O-methyl-ribonucleoside) in mRNA + S-adenosyl-L-homocysteine + H(+). The catalysed reaction is uridylyl-uridylyl-ribonucleotide-RNA = a 3'-end uridylyl-2',3'-cyclophospho-uridine-RNA + a 5'-end dephospho-ribonucleoside-RNA. The replicase polyprotein of coronaviruses is a multifunctional protein: it contains the activities necessary for the transcription of negative stranded RNA, leader RNA, subgenomic mRNAs and progeny virion RNA as well as proteinases responsible for the cleavage of the polyprotein into functional products. Functionally, non-structural protein 1 inhibits host translation. By suppressing host gene expression, nsp1 facilitates efficient viral gene expression in infected cells and evasion from host immune response. In terms of biological role, the papain-like proteinase 1 (PLP1) and papain-like proteinase 2 (PLP2) are responsible for the cleavages located at the N-terminus of the replicase polyprotein. In addition, PLP2 possesses a deubiquitinating/deISGylating activity and processes both 'Lys-48'- and 'Lys-63'-linked polyubiquitin chains from cellular substrates. PLP2 also antagonizes innate immune induction of type I interferon by blocking the nuclear translocation of host IRF-3. Its function is as follows. Responsible for the majority of cleavages as it cleaves the C-terminus of replicase polyprotein at 11 sites. Recognizes substrates containing the core sequence [ILMVF]-Q-|-[SAGC]. Inhibited by the substrate-analog Cbz-Val-Asn-Ser-Thr-Leu-Gln-CMK. The helicase which contains a zinc finger structure displays RNA and DNA duplex-unwinding activities with 5' to 3' polarity. ATPase activity is strongly stimulated by poly(U), poly(dT), poly(C), poly(dA), but not by poly(G). Functionally, the exoribonuclease acts on both ssRNA and dsRNA in a 3' to 5' direction. In terms of biological role, nsp7-nsp8 hexadecamer may possibly confer processivity to the polymerase, maybe by binding to dsRNA or by producing primers utilized by the latter. Its function is as follows. Forms a primer, NSP9-pU, which is utilized by the polymerase for the initiation of RNA chains. Interacts with ribosome signal recognition particle RNA (SRP). Together with NSP8, suppress protein integration into the cell membrane, thereby disrupting host immune defenses. RNA-directed RNA polymerase that catalyzes the transcription of viral genomic and subgenomic RNAs. Acts in complex with nsp7 and nsp8 to transcribe both the minus and positive strands of genomic RNA. The kinase-like NiRAN domain of NSP12 attaches one or more nucleotides to the amino terminus of NSP9, forming a covalent RNA-protein intermediate that serves as transcription/replication primer. Subgenomic RNAs (sgRNAs) are formed by discontinuous transcription: The polymerase has the ability to pause at transcription-regulating sequences (TRS) and jump to the leader TRS, resulting in a major deletion. This creates a series of subgenomic RNAs that are replicated, transcribed and translated. In addition, Nsp12 is a subunit of the viral RNA capping enzyme that catalyzes the RNA guanylyltransferase reaction for genomic and sub-genomic RNAs. Subsequently, the NiRAN domain transfers RNA to GDP, and forms the core cap structure GpppA-RNA. Functionally, plays a role in viral transcription/replication and prevents the simultaneous activation of host cell dsRNA sensors, such as MDA5/IFIH1, OAS, and PKR. Acts by degrading the 5'-polyuridines generated during replication of the poly(A) region of viral genomic and subgenomic RNAs. Catalyzes a two-step reaction in which a 2'3'-cyclic phosphate (2'3'-cP) is first generated by 2'-O transesterification, which is then hydrolyzed to a 3'-phosphate (3'-P). If not degraded, poly(U) RNA would hybridize with poly(A) RNA tails and activate host dsRNA sensors. The protein is Replicase polyprotein 1ab (rep) of Sus scrofa (Pig).